The sequence spans 406 residues: 2,3-bisphosphoglycerate-independent phosphoglycerate mutase (406 aa).

Belongs to the BPG-independent phosphoglycerate mutase family. A-PGAM subfamily.

It catalyses the reaction (2R)-2-phosphoglycerate = (2R)-3-phosphoglycerate. It functions in the pathway carbohydrate degradation; glycolysis; pyruvate from D-glyceraldehyde 3-phosphate: step 3/5. In terms of biological role, catalyzes the interconversion of 2-phosphoglycerate and 3-phosphoglycerate. This chain is 2,3-bisphosphoglycerate-independent phosphoglycerate mutase, found in Methanococcus maripaludis (strain DSM 14266 / JCM 13030 / NBRC 101832 / S2 / LL).